We begin with the raw amino-acid sequence, 267 residues long: 3-deoxy-manno-octulosonate cytidylyltransferase 2 (267 aa).

It belongs to the KdsB family.

It localises to the cytoplasm. It catalyses the reaction 3-deoxy-alpha-D-manno-oct-2-ulosonate + CTP = CMP-3-deoxy-beta-D-manno-octulosonate + diphosphate. It participates in nucleotide-sugar biosynthesis; CMP-3-deoxy-D-manno-octulosonate biosynthesis; CMP-3-deoxy-D-manno-octulosonate from 3-deoxy-D-manno-octulosonate and CTP: step 1/1. It functions in the pathway bacterial outer membrane biogenesis; lipopolysaccharide biosynthesis. In terms of biological role, activates KDO (a required 8-carbon sugar) for incorporation into bacterial lipopolysaccharide in Gram-negative bacteria. This Burkholderia ambifaria (strain MC40-6) protein is 3-deoxy-manno-octulosonate cytidylyltransferase 2.